Consider the following 326-residue polypeptide: tRNA-modifying protein YgfZ (326 aa).

Folate-binding residues include Trp-27 and Trp-189.

Belongs to the tRNA-modifying YgfZ family.

The protein localises to the cytoplasm. Its function is as follows. Folate-binding protein involved in regulating the level of ATP-DnaA and in the modification of some tRNAs. It is probably a key factor in regulatory networks that act via tRNA modification, such as initiation of chromosomal replication. This is tRNA-modifying protein YgfZ from Salmonella typhimurium (strain LT2 / SGSC1412 / ATCC 700720).